Reading from the N-terminus, the 64-residue chain is Large ribosomal subunit protein bL33 (64 aa).

A compositionally biased stretch (basic and acidic residues) spans 16–25; that stretch reads EARTSSEPRR. Residues 16–39 form a disordered region; it reads EARTSSEPRRSNGISRYTTEKNKR.

The protein belongs to the bacterial ribosomal protein bL33 family.

The chain is Large ribosomal subunit protein bL33 from Prochlorococcus marinus (strain MIT 9515).